Consider the following 348-residue polypeptide: Uroporphyrinogen decarboxylase (348 aa).

Substrate is bound by residues 23–27 (RQAGR), D72, Y148, S203, and H316.

Belongs to the uroporphyrinogen decarboxylase family. Homodimer.

The protein resides in the cytoplasm. It carries out the reaction uroporphyrinogen III + 4 H(+) = coproporphyrinogen III + 4 CO2. The protein operates within porphyrin-containing compound metabolism; protoporphyrin-IX biosynthesis; coproporphyrinogen-III from 5-aminolevulinate: step 4/4. Catalyzes the decarboxylation of four acetate groups of uroporphyrinogen-III to yield coproporphyrinogen-III. This chain is Uroporphyrinogen decarboxylase, found in Myxococcus xanthus (strain DK1622).